Reading from the N-terminus, the 253-residue chain is Mediator of RNA polymerase II transcription subunit 19 (253 aa).

Disordered stretches follow at residues 18 to 49 and 157 to 253; these read EQYS…TLKT and GPLP…TQVF. Over residues 21 to 40 the composition is skewed to low complexity; that stretch reads SPKSSPRAGGAGGRSPVVAR. Basic residues-rich tracts occupy residues 165-183 and 220-233; these read HLKS…KHKY and RKKR…KKQR.

Belongs to the Mediator complex subunit 19 family. Component of the Mediator complex.

The protein localises to the nucleus. In terms of biological role, component of the Mediator complex, a coactivator involved in the regulated transcription of nearly all RNA polymerase II-dependent genes. Mediator functions as a bridge to convey information from gene-specific regulatory proteins to the basal RNA polymerase II transcription machinery. Mediator is recruited to promoters by direct interactions with regulatory proteins and serves as a scaffold for the assembly of a functional preinitiation complex with RNA polymerase II and the general transcription factors. The polypeptide is Mediator of RNA polymerase II transcription subunit 19 (MED19) (Aedes aegypti (Yellowfever mosquito)).